Here is a 517-residue protein sequence, read N- to C-terminus: GMP synthase [glutamine-hydrolyzing] (517 aa).

One can recognise a Glutamine amidotransferase type-1 domain in the interval 9–199 (RILILDFGSQ…VLNVCGCEGL (191 aa)). The active-site Nucleophile is the C86. Catalysis depends on residues H173 and E175. One can recognise a GMPS ATP-PPase domain in the interval 200–392 (WTSASIIEDA…LGLPYNMLYR (193 aa)). 227 to 233 (SGGVDSS) is an ATP binding site.

In terms of assembly, homodimer.

The enzyme catalyses XMP + L-glutamine + ATP + H2O = GMP + L-glutamate + AMP + diphosphate + 2 H(+). Its pathway is purine metabolism; GMP biosynthesis; GMP from XMP (L-Gln route): step 1/1. Functionally, catalyzes the synthesis of GMP from XMP. The sequence is that of GMP synthase [glutamine-hydrolyzing] from Aliivibrio fischeri (strain ATCC 700601 / ES114) (Vibrio fischeri).